We begin with the raw amino-acid sequence, 621 residues long: Phytoene desaturase (621 aa).

Positions 1–23 are cleaved as a signal peptide; that stretch reads MPSTSKRPTAIVIGSGVGGVSTA. The interval 394-425 is disordered; it reads HASQAHQLSASRNGHISSASPPDQPGLTPTEK. The span at 397-414 shows a compositional bias: polar residues; that stretch reads QAHQLSASRNGHISSASP. A helical membrane pass occupies residues 598-618; the sequence is WEQWVSVLIYLLVGIFAWLWM.

It belongs to the carotenoid/retinoid oxidoreductase family. Requires NAD(+) as cofactor.

Its subcellular location is the membrane. The enzyme catalyses 15-cis-phytoene + 5 A = all-trans-3,4-didehydrolycopene + 5 AH2. Its pathway is carotenoid biosynthesis; lycopene biosynthesis. Its function is as follows. Phytoene desaturase involved in the carotenoid biosynthesis pathway. Converts phytoene into 3,4-didehydrolycopene via the intermediary of phytofluene, zeta-carotene, neurosporene and lycopene, by introducing up to five double bonds into phytoene. This chain is Phytoene desaturase (PDH1), found in Cercospora nicotianae (Barn spot disease fungus).